Here is a 308-residue protein sequence, read N- to C-terminus: Glutamyl-Q tRNA(Asp) synthetase (308 aa).

Residues 19–23 (RFAPS) and Glu-55 contribute to the L-glutamate site. Residues 22-32 (PSPSGELHFGS) carry the 'HIGH' region motif. The Zn(2+) site is built by Cys-111, Cys-113, Tyr-125, and Cys-129. The L-glutamate site is built by Tyr-182 and Arg-200. The 'KMSKS' region motif lies at 238–242 (KLSKQ). An ATP-binding site is contributed by Lys-241.

This sequence belongs to the class-I aminoacyl-tRNA synthetase family. GluQ subfamily. Requires Zn(2+) as cofactor.

Its function is as follows. Catalyzes the tRNA-independent activation of glutamate in presence of ATP and the subsequent transfer of glutamate onto a tRNA(Asp). Glutamate is transferred on the 2-amino-5-(4,5-dihydroxy-2-cyclopenten-1-yl) moiety of the queuosine in the wobble position of the QUC anticodon. The chain is Glutamyl-Q tRNA(Asp) synthetase from Escherichia coli O157:H7.